The primary structure comprises 133 residues: Profilin (133 aa).

The protein belongs to the profilin family.

More likely to influence phosphoinositide metabolism than actin assembly. The chain is Profilin from Camelus.